The primary structure comprises 545 residues: Threonine--tRNA ligase catalytic subunit (545 aa).

The interval 139–433 (DHRLIGEKLD…LLEHFKGKLP (295 aa)) is catalytic. Zn(2+) is bound by residues cysteine 231, histidine 282, and histidine 410.

It belongs to the class-II aminoacyl-tRNA synthetase family. As to quaternary structure, homodimer. Probably interacts with its editing subunit. Zn(2+) is required as a cofactor.

It is found in the cytoplasm. The enzyme catalyses tRNA(Thr) + L-threonine + ATP = L-threonyl-tRNA(Thr) + AMP + diphosphate + H(+). Functionally, catalyzes the attachment of threonine to tRNA(Thr) in a two-step reaction: L-threonine is first activated by ATP to form Thr-AMP and then transferred to the acceptor end of tRNA(Thr). Also activates L-serine and transfers it to tRNA(Thr) but cannot deacylate incorrectly charged amino acid; unlike most archaea the editing function is found in a freestanding protein. The polypeptide is Threonine--tRNA ligase catalytic subunit (Saccharolobus islandicus (strain Y.G.57.14 / Yellowstone #1) (Sulfolobus islandicus)).